Reading from the N-terminus, the 885-residue chain is Probable LRR receptor-like serine/threonine-protein kinase At1g51820 (885 aa).

An N-terminal signal peptide occupies residues 1–20; the sequence is MERHFVFIATYLLIFHLVQA. At 21–509 the chain is on the extracellular side; sequence QNQTGFISVD…GHKKKSVIVP (489 aa). N-linked (GlcNAc...) asparagine glycosylation is found at Asn-22, Asn-93, Asn-135, Asn-194, Asn-228, Asn-250, Asn-254, Asn-281, Asn-287, Asn-424, Asn-437, Asn-456, and Asn-461. 3 LRR repeats span residues 403-424, 427-447, and 451-473; these read IITSLDLSSSGLTGIITQAIKN, HLQILDLSDNNLTGEVPEFLA, and SLLVINLSGNNLSGSVPPSLLQK. A helical transmembrane segment spans residues 510–530; it reads VVASIASIAVLIGALVLFLIL. Residues 531-885 are Cytoplasmic-facing; sequence RKKRSPKVEG…FGTEVSPNAR (355 aa). One can recognise a Protein kinase domain in the interval 578–851; sequence NNFQRILGKG…QVVIELNECL (274 aa). Residues 584–592 and Lys-606 contribute to the ATP site; that span reads LGKGGFGMV. Phosphotyrosine is present on Tyr-651. Asp-703 functions as the Proton acceptor in the catalytic mechanism. Ser-737 carries the phosphoserine modification. Phosphothreonine occurs at positions 738 and 743. Position 751 is a phosphotyrosine (Tyr-751).

This sequence belongs to the protein kinase superfamily. Ser/Thr protein kinase family.

The protein localises to the membrane. It catalyses the reaction L-seryl-[protein] + ATP = O-phospho-L-seryl-[protein] + ADP + H(+). The catalysed reaction is L-threonyl-[protein] + ATP = O-phospho-L-threonyl-[protein] + ADP + H(+). The sequence is that of Probable LRR receptor-like serine/threonine-protein kinase At1g51820 from Arabidopsis thaliana (Mouse-ear cress).